A 358-amino-acid chain; its full sequence is MTQPQRVAVAMSGGVDSSATAALLVEQGYEVIGLTMQLWDHSSPKVAGSRSCCALDDLYDARQVAQTLGIPYYVVNYEADFRQAVVDDFIQTYAAGQTPNPCVRCNQILKFDLLLKKALALGADFLATGHYAIRREDAQGVPQLWQGSDPAKDQSYFLFTTTMAQLAHVRFPLGEMDKQQTRQLAQRFGLHLSTKQESQDVCFVPDGDYSAFFAKQAPHLLTPGAIVDQQGHSLGQHKGLGCYTVGQRKGLGIAHPTPLYVLALDAPHNQVIVGPAEALYQQQLTLHHVNWLEPTPPTEPFASMAKIRYAAPPVEARVEPLPDGGAQIYFNQPQRAITPGQACVFYDGARVVGGGWIV.

ATP is bound by residues 10-17 and Met-36; that span reads AMSGGVDS. The Nucleophile role is filled by Cys-105. Residues Cys-105 and Cys-202 are joined by a disulfide bond. Residue Gly-129 participates in ATP binding. Positions 152–154 are interaction with tRNA; sequence KDQ. Cys-202 acts as the Cysteine persulfide intermediate in catalysis. The tract at residues 308–309 is interaction with tRNA; it reads RY.

The protein belongs to the MnmA/TRMU family.

It is found in the cytoplasm. The catalysed reaction is S-sulfanyl-L-cysteinyl-[protein] + uridine(34) in tRNA + AH2 + ATP = 2-thiouridine(34) in tRNA + L-cysteinyl-[protein] + A + AMP + diphosphate + H(+). Functionally, catalyzes the 2-thiolation of uridine at the wobble position (U34) of tRNA, leading to the formation of s(2)U34. This Magnetococcus marinus (strain ATCC BAA-1437 / JCM 17883 / MC-1) protein is tRNA-specific 2-thiouridylase MnmA.